The chain runs to 508 residues: Light-independent protochlorophyllide reductase subunit B (508 aa).

Aspartate 36 lines the [4Fe-4S] cluster pocket. The active-site Proton donor is the aspartate 294. 429 to 430 provides a ligand contact to substrate; sequence GM.

The protein belongs to the ChlB/BchB/BchZ family. In terms of assembly, protochlorophyllide reductase is composed of three subunits; ChlL, ChlN and ChlB. Forms a heterotetramer of two ChlB and two ChlN subunits. [4Fe-4S] cluster is required as a cofactor.

It catalyses the reaction chlorophyllide a + oxidized 2[4Fe-4S]-[ferredoxin] + 2 ADP + 2 phosphate = protochlorophyllide a + reduced 2[4Fe-4S]-[ferredoxin] + 2 ATP + 2 H2O. The protein operates within porphyrin-containing compound metabolism; chlorophyll biosynthesis (light-independent). Functionally, component of the dark-operative protochlorophyllide reductase (DPOR) that uses Mg-ATP and reduced ferredoxin to reduce ring D of protochlorophyllide (Pchlide) to form chlorophyllide a (Chlide). This reaction is light-independent. The NB-protein (ChlN-ChlB) is the catalytic component of the complex. In Nostoc sp. (strain PCC 7120 / SAG 25.82 / UTEX 2576), this protein is Light-independent protochlorophyllide reductase subunit B.